The primary structure comprises 154 residues: Deoxyuridine 5'-triphosphate nucleotidohydrolase (154 aa).

Residues 64 to 66, Asn-77, 81 to 83, and Lys-91 contribute to the substrate site; these read RSG and TVD.

It belongs to the dUTPase family. As to quaternary structure, homotrimer. Mg(2+) serves as cofactor.

The catalysed reaction is dUTP + H2O = dUMP + diphosphate + H(+). The protein operates within pyrimidine metabolism; dUMP biosynthesis; dUMP from dCTP (dUTP route): step 2/2. Its function is as follows. This enzyme is involved in nucleotide metabolism: it produces dUMP, the immediate precursor of thymidine nucleotides and it decreases the intracellular concentration of dUTP so that uracil cannot be incorporated into DNA. The sequence is that of Deoxyuridine 5'-triphosphate nucleotidohydrolase from Mycobacterium leprae (strain Br4923).